The sequence spans 428 residues: MLDPKFLRNELAVTAERLATRGFILDVAHLTQLEEKRKSLQVATEELQAARNAISKSIGQAKARGEDVDAIMAQVGDLGSQVDAKKLELAAVLEEVNAIAMSMPNLPDESAPIGADETQNVEVRRWGTPRSFDFPIKDHIDLGEGLNGLDFKSAVKITGSRFIVMKGQIARLNRALGQFMLDLHTTEHGYTEAYVPLLVNEASLLGTGQLPKFGEDLFHTKPATEEGQGLSLIPTAEVPLTNLVRDSIVDEDELPIKLTAHTACFRSEAGSYGKDTRGLIRQHQFDKVELVQLVKPEDSMAALETLTNHAETVLQRLGLPYRTVVLCTGDMGFGSSKTYDIEVWLPGQNTYREISSCSNMKDFQARRMQARYRVKADNKPALLHTLNGSGLAVGRTLVAILENYQNADGSVTIPEALRSYMGGLTQIG.

T235–E237 lines the L-serine pocket. R266 to E268 contacts ATP. L-serine is bound at residue E289. ATP is bound at residue E353–S356. An L-serine-binding site is contributed by S389.

Belongs to the class-II aminoacyl-tRNA synthetase family. Type-1 seryl-tRNA synthetase subfamily. Homodimer. The tRNA molecule binds across the dimer.

It is found in the cytoplasm. It carries out the reaction tRNA(Ser) + L-serine + ATP = L-seryl-tRNA(Ser) + AMP + diphosphate + H(+). The catalysed reaction is tRNA(Sec) + L-serine + ATP = L-seryl-tRNA(Sec) + AMP + diphosphate + H(+). It functions in the pathway aminoacyl-tRNA biosynthesis; selenocysteinyl-tRNA(Sec) biosynthesis; L-seryl-tRNA(Sec) from L-serine and tRNA(Sec): step 1/1. Catalyzes the attachment of serine to tRNA(Ser). Is also able to aminoacylate tRNA(Sec) with serine, to form the misacylated tRNA L-seryl-tRNA(Sec), which will be further converted into selenocysteinyl-tRNA(Sec). This chain is Serine--tRNA ligase, found in Shewanella sp. (strain W3-18-1).